A 665-amino-acid chain; its full sequence is Probable arginine--tRNA ligase, cytoplasmic (665 aa).

Residues 204 to 206, His-215, Tyr-390, Asp-394, and Gln-418 contribute to the L-arginine site; that span reads SPN. Positions 205–216 match the 'HIGH' region motif; the sequence is PNIAKQMHVGHL. The interaction with tRNA stretch occupies residues 535 to 549; it reads NTAVYLLYTYTRICS.

The protein belongs to the class-I aminoacyl-tRNA synthetase family.

The protein localises to the cytoplasm. The protein resides in the cytosol. The catalysed reaction is tRNA(Arg) + L-arginine + ATP = L-arginyl-tRNA(Arg) + AMP + diphosphate. Forms part of a macromolecular complex that catalyzes the attachment of specific amino acids to cognate tRNAs during protein synthesis. The protein is Probable arginine--tRNA ligase, cytoplasmic of Drosophila melanogaster (Fruit fly).